Reading from the N-terminus, the 1225-residue chain is Hyphally regulated cell wall protein 4 (1225 aa).

The signal sequence occupies residues 1 to 20 (MFSYSQAIRFIIFLLPICLT). 6 N-linked (GlcNAc...) asparagine glycosylation sites follow: Asn-97, Asn-200, Asn-488, Asn-595, Asn-634, and Asn-694. The segment at 832–852 (DLDLPDDTTFTPSQSSSTTVP) is disordered. Positions 838–852 (DTTFTPSQSSSTTVP) are enriched in low complexity. Asn-933 and Asn-1035 each carry an N-linked (GlcNAc...) asparagine glycan. The interval 1049-1114 (AYTQQDASTQ…NSHFEGTFIS (66 aa)) is disordered. N-linked (GlcNAc...) asparagine glycosylation is found at Asn-1133, Asn-1150, Asn-1182, and Asn-1193. Residue Ser-1195 is the site of GPI-anchor amidated serine attachment. A propeptide spans 1196 to 1225 (GLISKSESVVLLIRPVMIFVFLAICVVIML) (removed in mature form).

The protein belongs to the HYR1/IFF family. The GPI-anchor is attached to the protein in the endoplasmic reticulum and serves to target the protein to the cell surface. There, the glucosamine-inositol phospholipid moiety is cleaved off and the GPI-modified mannoprotein is covalently attached via its lipidless GPI glycan remnant to the 1,6-beta-glucan of the outer cell wall layer.

It is found in the secreted. Its subcellular location is the cell wall. The protein resides in the membrane. Functionally, GPI-anchored cell wall protein involved in cell wall organization, hyphal growth, as well as in host-fungal interaction and virulence. This chain is Hyphally regulated cell wall protein 4 (HYR4), found in Candida albicans (strain SC5314 / ATCC MYA-2876) (Yeast).